The following is a 262-amino-acid chain: Small ribosomal subunit protein uS2 (262 aa).

It belongs to the universal ribosomal protein uS2 family.

This is Small ribosomal subunit protein uS2 from Roseiflexus sp. (strain RS-1).